Here is a 663-residue protein sequence, read N- to C-terminus: UvrABC system protein B (663 aa).

The region spanning Glu30–Arg417 is the Helicase ATP-binding domain. Gly43–Thr50 provides a ligand contact to ATP. Residues Tyr96–Ile119 carry the Beta-hairpin motif. Residues Gln434–Ile600 enclose the Helicase C-terminal domain. One can recognise a UVR domain in the interval Gln627–Glu662.

This sequence belongs to the UvrB family. Forms a heterotetramer with UvrA during the search for lesions. Interacts with UvrC in an incision complex.

The protein localises to the cytoplasm. Functionally, the UvrABC repair system catalyzes the recognition and processing of DNA lesions. A damage recognition complex composed of 2 UvrA and 2 UvrB subunits scans DNA for abnormalities. Upon binding of the UvrA(2)B(2) complex to a putative damaged site, the DNA wraps around one UvrB monomer. DNA wrap is dependent on ATP binding by UvrB and probably causes local melting of the DNA helix, facilitating insertion of UvrB beta-hairpin between the DNA strands. Then UvrB probes one DNA strand for the presence of a lesion. If a lesion is found the UvrA subunits dissociate and the UvrB-DNA preincision complex is formed. This complex is subsequently bound by UvrC and the second UvrB is released. If no lesion is found, the DNA wraps around the other UvrB subunit that will check the other stand for damage. The sequence is that of UvrABC system protein B from Staphylococcus aureus (strain COL).